The primary structure comprises 394 residues: Phosphopentomutase (394 aa).

Positions 13, 286, 291, 327, 328, and 339 each coordinate Mn(2+).

It belongs to the phosphopentomutase family. Mn(2+) is required as a cofactor.

It is found in the cytoplasm. The enzyme catalyses 2-deoxy-alpha-D-ribose 1-phosphate = 2-deoxy-D-ribose 5-phosphate. It carries out the reaction alpha-D-ribose 1-phosphate = D-ribose 5-phosphate. Its pathway is carbohydrate degradation; 2-deoxy-D-ribose 1-phosphate degradation; D-glyceraldehyde 3-phosphate and acetaldehyde from 2-deoxy-alpha-D-ribose 1-phosphate: step 1/2. Its function is as follows. Isomerase that catalyzes the conversion of deoxy-ribose 1-phosphate (dRib-1-P) and ribose 1-phosphate (Rib-1-P) to deoxy-ribose 5-phosphate (dRib-5-P) and ribose 5-phosphate (Rib-5-P), respectively. The chain is Phosphopentomutase from Bacillus cereus (strain ATCC 10987 / NRS 248).